Consider the following 94-residue polypeptide: Translation initiation factor 1A 2 (94 aa).

The S1-like domain maps to 6 to 80 (GRRNLRMPSD…EKANIEWRYS (75 aa)).

It belongs to the eIF-1A family.

In terms of biological role, seems to be required for maximal rate of protein biosynthesis. Enhances ribosome dissociation into subunits and stabilizes the binding of the initiator Met-tRNA(I) to 40 S ribosomal subunits. This is Translation initiation factor 1A 2 from Haloquadratum walsbyi (strain DSM 16790 / HBSQ001).